A 483-amino-acid polypeptide reads, in one-letter code: Regulatory protein ViaA (483 aa).

It belongs to the ViaA family. As to quaternary structure, homodimer. Interacts with RavA.

It is found in the cytoplasm. Its function is as follows. Component of the RavA-ViaA chaperone complex, which may act on the membrane to optimize the function of some of the respiratory chains. ViaA stimulates the ATPase activity of RavA. The protein is Regulatory protein ViaA of Escherichia coli O81 (strain ED1a).